A 191-amino-acid chain; its full sequence is Cell division protein SepF (191 aa).

The segment at 1-77 (MEGQDDYQLL…MGSNVIGLPG (77 aa)) is disordered.

It belongs to the SepF family. In terms of assembly, homodimer. Interacts with FtsZ.

The protein resides in the cytoplasm. In terms of biological role, cell division protein that is part of the divisome complex and is recruited early to the Z-ring. Probably stimulates Z-ring formation, perhaps through the cross-linking of FtsZ protofilaments. Its function overlaps with FtsA. This chain is Cell division protein SepF, found in Synechococcus sp. (strain JA-2-3B'a(2-13)) (Cyanobacteria bacterium Yellowstone B-Prime).